We begin with the raw amino-acid sequence, 149 residues long: Protein E4.1 (149 aa).

This Snake adenovirus serotype 1 (SnAdV-1) protein is Protein E4.1.